A 1405-amino-acid chain; its full sequence is DNA-directed RNA polymerase subunit beta' (1405 aa).

Residues Cys-70, Cys-72, Cys-85, and Cys-88 each contribute to the Zn(2+) site. Asp-458, Asp-460, and Asp-462 together coordinate Mg(2+). Residues Cys-813, Cys-887, Cys-894, and Cys-897 each contribute to the Zn(2+) site.

This sequence belongs to the RNA polymerase beta' chain family. The RNAP catalytic core consists of 2 alpha, 1 beta, 1 beta' and 1 omega subunit. When a sigma factor is associated with the core the holoenzyme is formed, which can initiate transcription. Requires Mg(2+) as cofactor. Zn(2+) is required as a cofactor.

The enzyme catalyses RNA(n) + a ribonucleoside 5'-triphosphate = RNA(n+1) + diphosphate. Its function is as follows. DNA-dependent RNA polymerase catalyzes the transcription of DNA into RNA using the four ribonucleoside triphosphates as substrates. This chain is DNA-directed RNA polymerase subunit beta', found in Albidiferax ferrireducens (strain ATCC BAA-621 / DSM 15236 / T118) (Rhodoferax ferrireducens).